Here is a 305-residue protein sequence, read N- to C-terminus: Probable 5-dehydro-4-deoxyglucarate dehydratase (305 aa).

This sequence belongs to the DapA family.

It catalyses the reaction 5-dehydro-4-deoxy-D-glucarate + H(+) = 2,5-dioxopentanoate + CO2 + H2O. It functions in the pathway carbohydrate acid metabolism; D-glucarate degradation; 2,5-dioxopentanoate from D-glucarate: step 2/2. The chain is Probable 5-dehydro-4-deoxyglucarate dehydratase from Xanthomonas campestris pv. campestris (strain B100).